The following is a 305-amino-acid chain: Heterogeneous nuclear ribonucleoprotein A0 (305 aa).

Methionine 1 is subject to N-acetylmethionine. An RRM 1 domain is found at 7–86 (CKLFIGGLNV…VELKRAVSRE (80 aa)). Position 68 is a phosphoserine (serine 68). Lysine 80 participates in a covalent cross-link: Glycyl lysine isopeptide (Lys-Gly) (interchain with G-Cter in SUMO2). Serine 84 bears the Phosphoserine; by MAPKAPK2 mark. Glycyl lysine isopeptide (Lys-Gly) (interchain with G-Cter in SUMO2) cross-links involve residues lysine 96, lysine 98, lysine 99, and lysine 106. An RRM 2 domain is found at 98 to 175 (KKLFVGGLKG…HRVEVKKAVP (78 aa)). An N6-acetyllysine modification is found at lysine 133. The residue at position 139 (arginine 139) is an Omega-N-methylarginine. Glycyl lysine isopeptide (Lys-Gly) (interchain with G-Cter in SUMO2) cross-links involve residues lysine 154, lysine 159, lysine 172, and lysine 176. 2 disordered regions span residues 178–211 (DIHA…RDQN) and 265–305 (QSSY…GGSF). Gly residues-rich tracts occupy residues 181 to 211 (AGGG…RDQN) and 272 to 284 (KSGG…GSWG). Arginine 286 carries the omega-N-methylarginine modification. Positions 292–305 (YRGGYGGGYGGGSF) are enriched in gly residues. Arginine 293 carries the post-translational modification Asymmetric dimethylarginine; alternate. Position 293 is a dimethylated arginine; alternate (arginine 293). The residue at position 293 (arginine 293) is an Omega-N-methylarginine; alternate.

Phosphorylated at Ser-84 by MAPKAPK2 in response to LPS treatment, promoting stabilization of GADD45A mRNA. Post-translationally, arg-293 is dimethylated, probably to asymmetric dimethylarginine.

It localises to the nucleus. In terms of biological role, mRNA-binding component of ribonucleosomes. Specifically binds AU-rich element (ARE)-containing mRNAs. Involved in post-transcriptional regulation of cytokines mRNAs. This chain is Heterogeneous nuclear ribonucleoprotein A0 (Hnrnpa0), found in Mus musculus (Mouse).